Consider the following 492-residue polypeptide: Sestrin-1 (492 aa).

The segment at 71–252 (FADSFAALGR…ICDITNGNHS (182 aa)) is N-terminal domain; may mediate the alkylhydroperoxide reductase activity. The Cysteine sulfenic acid (-SOH) intermediate role is filled by cysteine 130. Phosphoserine occurs at positions 293 and 314. The C-terminal domain; mediates TORC1 regulation stretch occupies residues 321-492 (PARDVSRHFE…ALRAITRYMT (172 aa)). Residues 386-389 (TYNT), threonine 398, and glutamate 463 each bind L-leucine.

It belongs to the sestrin family. As to quaternary structure, interacts with the GATOR2 complex which is composed of MIOS, SEC13, SEH1L, WDR24 and WDR59; the interaction is negatively regulated by leucine. Interacts with RRAGA, RRAGB, RRAGC and RRAGD; may function as a guanine nucleotide dissociation inhibitor for RRAGs and regulate them. Interacts with KEAP1, RBX1 and SQSTM1; in the SQSTM1-dependent autophagic degradation of KEAP1. May interact with PRDX1.

The protein localises to the nucleus. It localises to the cytoplasm. The catalysed reaction is a hydroperoxide + L-cysteinyl-[protein] = S-hydroxy-L-cysteinyl-[protein] + an alcohol. Functionally, functions as an intracellular leucine sensor that negatively regulates the TORC1 signaling pathway through the GATOR complex. In absence of leucine, binds the GATOR subcomplex GATOR2 and prevents TORC1 signaling. Binding of leucine to SESN2 disrupts its interaction with GATOR2 thereby activating the TORC1 signaling pathway. This stress-inducible metabolic regulator may also play a role in protection against oxidative and genotoxic stresses. May positively regulate the transcription by NFE2L2 of genes involved in the response to oxidative stress by facilitating the SQSTM1-mediated autophagic degradation of KEAP1. Moreover, may prevent the accumulation of reactive oxygen species (ROS) through the alkylhydroperoxide reductase activity born by the N-terminal domain of the protein. Was originally reported to contribute to oxidative stress resistance by reducing PRDX1. However, this could not be confirmed. The polypeptide is Sestrin-1 (Macaca fascicularis (Crab-eating macaque)).